Here is a 112-residue protein sequence, read N- to C-terminus: Large ribosomal subunit protein uL22 (112 aa).

Belongs to the universal ribosomal protein uL22 family. Part of the 50S ribosomal subunit.

Its function is as follows. This protein binds specifically to 23S rRNA; its binding is stimulated by other ribosomal proteins, e.g. L4, L17, and L20. It is important during the early stages of 50S assembly. It makes multiple contacts with different domains of the 23S rRNA in the assembled 50S subunit and ribosome. The globular domain of the protein is located near the polypeptide exit tunnel on the outside of the subunit, while an extended beta-hairpin is found that lines the wall of the exit tunnel in the center of the 70S ribosome. The protein is Large ribosomal subunit protein uL22 of Nitratidesulfovibrio vulgaris (strain DSM 19637 / Miyazaki F) (Desulfovibrio vulgaris).